We begin with the raw amino-acid sequence, 662 residues long: MSWSSALIKDISKPENLIISSEIAVVIADKFPKAQHHYLVLPLADIPSIFHLNRSHLSLLEELHLLARNVVEVKGVRWQDFNVGFHAEPSMQRLHLHVISKDFVSTSLKTKKHWNSFNTELFVPYTKLYAQLEKENSISRLPKSLKDELLAKPLICNQCEFVARNLPSLKGHLVGHLQDPKSVCQRVRLGNQFFPTAGYRTSELAYCFDFVDFYEYKKQMEVDKLAYIRDELQRKLNDKRNFLIESDRAVVMKADYPKSQYHFRVVAKEEFRDITQLTEAQLPLLDHMMDLANQIIEKQKHLESRNFLIGFKVNTFWNRLNLHVISNDFYSMAMKRISHWNSFNTELFMPFQIAYMMLSVQGSIESISEETYNNLQEKTPLRCNQCEFVTNMLLDLKAHLYQHWQRKEDERDQKKKVDKIIQMISETKLDEAEAKPKLLNEEEPIQAQPVAAIAQYPNEHLGKPLTPQQQPGKQQAQNVYDKNINGPSVNMMNQNNPNNPFRNTPHLNRQSQKPPHPRSGPRGPMAPWTGPRFPCHQQQNRFRPPGFNACRQPYPPYHSGHQQFPNASSVGGGQTGLPGQGQGPRPKWNSNKIFNQQNRQNTVQAQPQAQNQQTNQQQIQNSNKNQTPKKKPWKNRLQPVGKVQNQGGANRDPAPPSNSKPS.

The region spanning 4-108 is the HIT domain; that stretch reads SSALIKDISK…ISKDFVSTSL (105 aa). Residues 381–403 form a C2H2-type zinc finger; it reads LRCNQCEFVTNMLLDLKAHLYQH. Positions 482–662 are disordered; that stretch reads KNINGPSVNM…PAPPSNSKPS (181 aa). Low complexity predominate over residues 490 to 500; sequence NMMNQNNPNNP. Polar residues-rich tracts occupy residues 501 to 513 and 560 to 569; these read FRNT…QSQK and GHQQFPNASS. Residues 570-582 show a composition bias toward gly residues; that stretch reads VGGGQTGLPGQGQ. Residues 588–599 show a composition bias toward polar residues; the sequence is WNSNKIFNQQNR. Residues 600-626 show a composition bias toward low complexity; that stretch reads QNTVQAQPQAQNQQTNQQQIQNSNKNQ. The span at 653–662 shows a compositional bias: pro residues; sequence PAPPSNSKPS.

It localises to the nucleus. Its function is as follows. DNA-binding protein involved in single-strand DNA break repair, double-strand DNA break repair and base excision repair. Resolves abortive DNA ligation intermediates formed either at base excision sites, or when DNA ligases attempt to repair non-ligatable breaks induced by reactive oxygen species. Catalyzes the release of adenylate groups covalently linked to 5'-phosphate termini, resulting in the production of 5'-phosphate termini that can be efficiently rejoined. The chain is Aprataxin-like protein from Drosophila melanogaster (Fruit fly).